A 504-amino-acid chain; its full sequence is Maturase K (504 aa).

This sequence belongs to the intron maturase 2 family. MatK subfamily.

Its subcellular location is the plastid. It is found in the chloroplast. Its function is as follows. Usually encoded in the trnK tRNA gene intron. Probably assists in splicing its own and other chloroplast group II introns. The chain is Maturase K from Hamamelis virginiana (Witch-hazel).